Consider the following 102-residue polypeptide: Co-chaperonin GroES (102 aa).

The protein belongs to the GroES chaperonin family. As to quaternary structure, heptamer of 7 subunits arranged in a ring. Interacts with the chaperonin GroEL.

The protein resides in the cytoplasm. In terms of biological role, together with the chaperonin GroEL, plays an essential role in assisting protein folding. The GroEL-GroES system forms a nano-cage that allows encapsulation of the non-native substrate proteins and provides a physical environment optimized to promote and accelerate protein folding. GroES binds to the apical surface of the GroEL ring, thereby capping the opening of the GroEL channel. The sequence is that of Co-chaperonin GroES from Vibrio harveyi (Beneckea harveyi).